Reading from the N-terminus, the 1018-residue chain is Inner centromere protein pic1 (1018 aa).

Residue Ser-171 is modified to Phosphoserine. Disordered stretches follow at residues 184–207, 247–287, 306–365, 522–556, 570–756, 781–813, 848–867, and 877–944; these read VPLRETSPSPSETADSPNKLPKQK, RTKD…SSSP, AKES…PPEI, TRKSSNDFNSSNSRPSSNALKSDANENTDSSLPPS, EPLH…TSKP, EPDSVTSVTQPSVGSLRNNFDIGTTNSQNEDRK, TKQNGIMKGKLPSSSTSQSN, and HAPA…LPSW. 2 stretches are compositionally biased toward polar residues: residues 189-199 and 268-287; these read TSPSPSETADS and PSTTSDAPSSLLNTNVSSSP. Over residues 309 to 320 the composition is skewed to low complexity; it reads SLTSSTRLSTSY. Composition is skewed to polar residues over residues 329 to 339 and 522 to 554; these read VAFSSETVTSS and TRKSSNDFNSSNSRPSSNALKSDANENTDSSLP. 2 stretches are compositionally biased toward basic and acidic residues: residues 570-580 and 624-644; these read EPLHDDSRQNS and RSSENETHRFKKFYGKERELS. Residues 645 to 664 show a composition bias toward polar residues; sequence NNEFPSRQTKTVTSANSSNI. Basic and acidic residues-rich tracts occupy residues 665–679 and 692–702; these read RDMEHTISDKPRSEP and KPFEEKSEKPT. Composition is skewed to polar residues over residues 705–719 and 784–808; these read RLVTNPSNVNASWHS and SVTSVTQPSVGSLRNNFDIGTTNSQ. Positions 890 to 902 are enriched in low complexity; that stretch reads PSSKSPLLKTPKS.

The protein belongs to the INCENP family. Component of the CPC complex at least composed of ark1, bir1 and pic1.

Its subcellular location is the nucleus. It localises to the cytoplasm. It is found in the cytoskeleton. The protein localises to the spindle. Functionally, component of the chromosomal passenger complex (CPC), a complex that acts as a key regulator of mitosis. Has a role in sister chromatid cohesion and condensation. The chain is Inner centromere protein pic1 (pic1) from Schizosaccharomyces pombe (strain 972 / ATCC 24843) (Fission yeast).